The primary structure comprises 62 residues: MARYRHSRSRSRSRYRRRRRRRSRYRSRRRRYRGSRRRRSRRRGRRRGYSRRRYSRRRRRRY.

The interval 1 to 62 (MARYRHSRSR…RYSRRRRRRY (62 aa)) is disordered.

Belongs to the protamine P1 family. Testis.

It localises to the nucleus. Its subcellular location is the chromosome. Functionally, protamines substitute for histones in the chromatin of sperm during the haploid phase of spermatogenesis. They compact sperm DNA into a highly condensed, stable and inactive complex. In Bettongia penicillata (Brush-tailed bettong), this protein is Sperm protamine P1 (PRM1).